The following is a 255-amino-acid chain: Diphthine--ammonia ligase (255 aa).

This sequence belongs to the Diphthine--ammonia ligase family.

It catalyses the reaction diphthine-[translation elongation factor 2] + NH4(+) + ATP = diphthamide-[translation elongation factor 2] + AMP + diphosphate + H(+). Its pathway is protein modification; peptidyl-diphthamide biosynthesis. In terms of biological role, amidase that catalyzes the last step of diphthamide biosynthesis using ammonium and ATP. Diphthamide biosynthesis consists in the conversion of an L-histidine residue in the translation elongation factor eEF-2 (EEF2) to diphthamide. In Danio rerio (Zebrafish), this protein is Diphthine--ammonia ligase (dph6).